A 377-amino-acid chain; its full sequence is Mitogen-activated protein kinase pmk-1 (377 aa).

A Protein kinase domain is found at 35–319 (YINLTPIGTG…AKEAMEHEYL (285 aa)). ATP contacts are provided by residues 41–49 (IGTGAYGTV) and K64. The active-site Proton acceptor is D179. Residue T191 is modified to Phosphothreonine. The TXY signature appears at 191-193 (TGY). The residue at position 193 (Y193) is a Phosphotyrosine.

This sequence belongs to the protein kinase superfamily. CMGC Ser/Thr protein kinase family. MAP kinase subfamily. Interacts with transcription factor atf-7; perhaps in a manner dependent on dual specificity protein kinase sek-1. Mg(2+) is required as a cofactor. The cofactor is Mn(2+). In terms of processing, dually phosphorylated on Thr-191 and Tyr-193, probably by sek-1, which activates the enzyme. Increased phosphorylation in response to the heavy metal arsenite. Increased phosphorylation in response to intestinal colonization by probiotic Lactobacillus fermentum strain JDFM216. In terms of tissue distribution, expressed in intestinal cells.

It is found in the nucleus. The enzyme catalyses L-seryl-[protein] + ATP = O-phospho-L-seryl-[protein] + ADP + H(+). The catalysed reaction is L-threonyl-[protein] + ATP = O-phospho-L-threonyl-[protein] + ADP + H(+). With respect to regulation, activated by phosphorylation on threonine and tyrosine. Inhibited by pyridinyl-imidazole related compounds. Its function is as follows. Serine/threonine kinase which responds to activation by environmental stress and pro-inflammatory cytokines by phosphorylating downstream targets. As part of a MAP kinase signaling pathway, plays a role in modulation of lifespan and immunity. Phosphorylates skn-1 which probably regulates skn-1 nuclear translocation in response to oxidative stress. Probably by activating skn-1, involved in the up-regulation of gcs-1 and glutathione-S-transferase gst-4 expression upon bacteria infection. Up-regulates expression of gcs-1 in intestinal cells upon arsenite treatment. Functions downstream of the MAPKK sek-1 and the MAPKKK nsy-1 as the MAP kinase which regulates pathogen resistance and responses to oxidative stress. Required for expression of antimicrobial peptide nlp-29 in response to fungal infection or physical injury. Involved in resistance to the nematotoxic C.cinerea galectin (Cgl2). May play a redundant role with other MAP kinases in susceptibility to anoxia, downstream of tir-1/nsy-1. Phosphorylates transcription factor rnt-1 during oxidative stress which results in rnt-1 stabilization in the intestine. Phosphorylates transcription factor atf-7 during pathogen infection resulting in modulation of target genes. Probably downstream of nsy-1 and sek-1, involved in germline apoptosis induced by heavy metals, such as Cu(2+). Regulates the basal expression of immune effector genes including irg-4, irg-5, mul-1 and drd-50. The sequence is that of Mitogen-activated protein kinase pmk-1 from Caenorhabditis elegans.